The primary structure comprises 156 residues: Interleukin-36 receptor antagonist protein (156 aa).

Residues cysteine 9 and cysteine 155 are joined by a disulfide bond.

It belongs to the IL-1 family. Interacts with cargo receptor TMED10; the interaction mediates the translocation from the cytoplasm into the ERGIC (endoplasmic reticulum-Golgi intermediate compartment) and thereby secretion. Removal of N-terminal methionine is necessary for full antagonistic activity. Highly abundant in embryonic tissue and tissues containing epithelial cells.

It localises to the cytoplasm. The protein resides in the secreted. In terms of biological role, inhibits the activity of interleukin-36 (IL36A,IL36B and IL36G) by binding to receptor IL1RL2/IL-36R and preventing its association with the coreceptor IL1RAP for signaling. Part of the IL-36 signaling system that is thought to be present in epithelial barriers and to take part in local inflammatory response; similar to the IL-1 system with which it shares the coreceptor. Proposed to play a role in skin inflammation. May be involved in the innate immune response to fungal pathogens. May activate an anti-inflammatory signaling pathway by recruiting SIGIRR. This Mus musculus (Mouse) protein is Interleukin-36 receptor antagonist protein.